The chain runs to 189 residues: Phomopsin biosynthesis cluster protein D (189 aa).

Belongs to the oryJ family.

Part of the gene cluster that mediates the biosynthesis of the phomopsins, a group of hexapeptide mycotoxins which infects lupins and causes lupinosis disease in livestock. The role of phomC within the phomopsins biosynthesis pathway has still to be determined. The pathway starts with the processing of the precursor phomA by several endopeptidases including kexin proteases as well as the cluster-specific S41 family peptidase phomP1 and the oligopeptidase phomG to produce 10 identical copies of the hexapeptide Tyr-Val-Ile-Pro-Ile-Asp. After being excised from the precursor peptide, the core peptides are cyclized and modified post-translationally by enzymes encoded within the gene cluster. The timing and order of proteolysis of the phomA precursor and PTMs are still unknown. Two tyrosinase-like enzymes, phomQ1 and phomQ2, catalyze the chlorination and hydroxylation of Tyr, respectively. PhomYb, is proposed to be involved in the construction of the macrocyclic structure. The other 4 ustYa family proteins may be involved in PTMs that generate the unique structure of phomopsin A. PhomYa is required for the hydroxylation of C-beta of Tyr. PhomYc, phomYd, and phomYe are responsible for the biosynthesis of 2,3-dehydroisoleucine (dIle), 2,3-dehydroaspartic acid (dAsp), and 3,4-dehydroproline (dPro), respectively. While dIle formation by phomYc is indispensable for the installation of dAsp by phomYd, the order of the other PTMs have not been elucidated yet. Most of the biosynthetic enzymes likely have broad substrate specificity, and thus, there might be a metabolic grid from a precursor to phomopsin A. The enzyme(s) responsible for the biosynthesis of 3,4-dehydrovaline (dVal) have also not been identified yet. Finally, phomM acts as an S-adenosylmethionine-dependent alpha-N-methyltransferase that catalyzes two successive N-methylation reactions, converting N-desmethyl-phomopsin A to phomopsin A and phomopsin A further to an N,N-dimethylated congener called phomopsin E. The protein is Phomopsin biosynthesis cluster protein D of Diaporthe leptostromiformis (Lupinosis disease fungus).